The sequence spans 260 residues: 1-(5-phosphoribosyl)-5-[(5-phosphoribosylamino)methylideneamino] imidazole-4-carboxamide isomerase (260 aa).

The active-site Proton acceptor is the Asp-8. The active-site Proton donor is the Asp-130.

This sequence belongs to the HisA/HisF family.

It localises to the cytoplasm. The enzyme catalyses 1-(5-phospho-beta-D-ribosyl)-5-[(5-phospho-beta-D-ribosylamino)methylideneamino]imidazole-4-carboxamide = 5-[(5-phospho-1-deoxy-D-ribulos-1-ylimino)methylamino]-1-(5-phospho-beta-D-ribosyl)imidazole-4-carboxamide. It participates in amino-acid biosynthesis; L-histidine biosynthesis; L-histidine from 5-phospho-alpha-D-ribose 1-diphosphate: step 4/9. This Chlorobium phaeobacteroides (strain BS1) protein is 1-(5-phosphoribosyl)-5-[(5-phosphoribosylamino)methylideneamino] imidazole-4-carboxamide isomerase.